A 320-amino-acid polypeptide reads, in one-letter code: Glutathione synthetase (320 aa).

The ATP-grasp domain maps to 130–315 (KIFISWFSRF…ITGILIDYIE (186 aa)). 156-212 (WKEKNDIILKPLDAMGGKGVFRIKKDDPNFSVIVETLTNYEKKYCMIQTYLPEVQFG) is an ATP binding site. 2 residues coordinate Mg(2+): E286 and N288.

It belongs to the prokaryotic GSH synthase family. The cofactor is Mg(2+). Mn(2+) is required as a cofactor.

It carries out the reaction gamma-L-glutamyl-L-cysteine + glycine + ATP = glutathione + ADP + phosphate + H(+). The protein operates within sulfur metabolism; glutathione biosynthesis; glutathione from L-cysteine and L-glutamate: step 2/2. The sequence is that of Glutathione synthetase from Buchnera aphidicola subsp. Schizaphis graminum (strain Sg).